The chain runs to 289 residues: MSGFSTEERAAPFSLEYRVFLKNEKGQYISPFHDIPIYADKDVFHMVVEVPRWSNAKMEIATKDPLNPIKQDVKKGKLRYVANLFPYKGYIWNYGAIPQTWEDPGHNDKHTGCCGDNDPIDVCEIGSKVCARGEIIGVKVLGILAMIDEGETDWKVIAINVDDPDAANYNDINDVKRLKPGYLEATVDWFRRYKVPDGKPENEFAFNAEFKDKDFAIDIIKSTHDHWKALVTKKTNGKGISCMNTTLSESPFKCDPDAARAIVDALPPPCESACTVPTDVDKWFHHQKN.

Residue S2 is modified to N-acetylserine. The residue at position 57 (K57) is an N6-acetyllysine. Residues D116, D121, and D153 each coordinate Mg(2+). An N6-acetyllysine modification is found at K228. Position 250 is a phosphoserine (S250).

It belongs to the PPase family. As to quaternary structure, homodimer. Requires Mg(2+) as cofactor. Expressed ubiquitously.

The protein localises to the cytoplasm. It catalyses the reaction diphosphate + H2O = 2 phosphate + H(+). The protein is Inorganic pyrophosphatase (PPA1) of Homo sapiens (Human).